A 450-amino-acid polypeptide reads, in one-letter code: UDP-N-acetylmuramoylalanine--D-glutamate ligase (450 aa).

ATP is bound at residue 119 to 125 (GSNGKTT).

Belongs to the MurCDEF family.

It localises to the cytoplasm. The catalysed reaction is UDP-N-acetyl-alpha-D-muramoyl-L-alanine + D-glutamate + ATP = UDP-N-acetyl-alpha-D-muramoyl-L-alanyl-D-glutamate + ADP + phosphate + H(+). The protein operates within cell wall biogenesis; peptidoglycan biosynthesis. Functionally, cell wall formation. Catalyzes the addition of glutamate to the nucleotide precursor UDP-N-acetylmuramoyl-L-alanine (UMA). The sequence is that of UDP-N-acetylmuramoylalanine--D-glutamate ligase from Streptococcus gordonii (strain Challis / ATCC 35105 / BCRC 15272 / CH1 / DL1 / V288).